A 183-amino-acid chain; its full sequence is uncharacterized protein (183 aa).

Positions methionine 1–alanine 36 are disordered. Residues threonine 100–asparagine 174 enclose the RRM domain.

It localises to the nucleus. Its subcellular location is the nucleolus. This is an uncharacterized protein from Schizosaccharomyces pombe (strain 972 / ATCC 24843) (Fission yeast).